The chain runs to 1405 residues: ATP-dependent helicase/nuclease subunit A (1405 aa).

Residues 7-482 (REWTPDQLAA…ILLKANFRSR (476 aa)) form the UvrD-like helicase ATP-binding domain. 28–35 (AAAGAGKT) contributes to the ATP binding site. Positions 551-914 (PEAVGAGKGG…RVMSIHRAKG (364 aa)) constitute a UvrD-like helicase C-terminal domain. Disordered regions lie at residues 778-797 (QEPW…KAVP) and 1132-1165 (AGKT…QDET). The segment covering 787 to 796 (GPGAAAGKAV) has biased composition (low complexity).

Belongs to the helicase family. AddA subfamily. As to quaternary structure, heterodimer of AddA and AddB/RexB. It depends on Mg(2+) as a cofactor.

It catalyses the reaction Couples ATP hydrolysis with the unwinding of duplex DNA by translocating in the 3'-5' direction.. It carries out the reaction ATP + H2O = ADP + phosphate + H(+). Its function is as follows. The heterodimer acts as both an ATP-dependent DNA helicase and an ATP-dependent, dual-direction single-stranded exonuclease. Recognizes the chi site generating a DNA molecule suitable for the initiation of homologous recombination. The AddA nuclease domain is required for chi fragment generation; this subunit has the helicase and 3' -&gt; 5' nuclease activities. This Moorella thermoacetica (strain ATCC 39073 / JCM 9320) protein is ATP-dependent helicase/nuclease subunit A.